The following is a 415-amino-acid chain: G patch domain-containing protein 4 (415 aa).

N-acetylmethionine is present on methionine 1. A Phosphothreonine modification is found at threonine 4. One can recognise a G-patch domain in the interval 11–57; the sequence is GMKFAEEQLLKHGWTQGKGLGRRENGITQALKVTLKQDNHGVGHDPA. Lysine 46 participates in a covalent cross-link: Glycyl lysine isopeptide (Lys-Gly) (interchain with G-Cter in SUMO2). Threonine 116 carries the post-translational modification Phosphothreonine. Disordered regions lie at residues 116 to 141 and 191 to 415; these read TSGE…TPPK and LGTS…VDLS. Basic and acidic residues predominate over residues 118–141; sequence GEEKPDRDLGNCSDVDNHEPTPPK. Serine 130 carries the post-translational modification Phosphoserine. Residues 191–201 show a composition bias toward polar residues; sequence LGTSQPLTDSE. Positions 224 to 239 are enriched in basic and acidic residues; it reads SLGDELLGHTDRSFRD. Serine 258 is subject to Phosphoserine. A compositionally biased stretch (acidic residues) spans 335–345; the sequence is EDLDTQEEEGK. Over residues 353-364 the composition is skewed to basic residues; that stretch reads RKVRRKDKRKRQ. A compositionally biased stretch (basic and acidic residues) spans 387 to 397; it reads AGERSRQYPKE. Basic residues predominate over residues 398 to 407; the sequence is RAKKKKRKRD.

The protein is G patch domain-containing protein 4 (Gpatch4) of Mus musculus (Mouse).